Consider the following 239-residue polypeptide: 2,3,4,5-tetrahydropyridine-2,6-dicarboxylate N-acetyltransferase (239 aa).

Belongs to the transferase hexapeptide repeat family. DapH subfamily.

It carries out the reaction (S)-2,3,4,5-tetrahydrodipicolinate + acetyl-CoA + H2O = L-2-acetamido-6-oxoheptanedioate + CoA. It functions in the pathway amino-acid biosynthesis; L-lysine biosynthesis via DAP pathway; LL-2,6-diaminopimelate from (S)-tetrahydrodipicolinate (acetylase route): step 1/3. Its function is as follows. Catalyzes the transfer of an acetyl group from acetyl-CoA to tetrahydrodipicolinate. The protein is 2,3,4,5-tetrahydropyridine-2,6-dicarboxylate N-acetyltransferase of Staphylococcus saprophyticus subsp. saprophyticus (strain ATCC 15305 / DSM 20229 / NCIMB 8711 / NCTC 7292 / S-41).